The sequence spans 669 residues: Matrix metalloproteinase-15 (669 aa).

The segment at residues 1–41 is a signal peptide (or 45); the sequence is MGSDPSAPGRPGWTGSLLGDREEAARPRLLPLLLVLLGCLG. Residues 42–131 constitute a propeptide that is removed on maturation; sequence LGVAAEDAEV…KANLRRRRKR (90 aa). Residues 109 to 116 carry the Cysteine switch motif; it reads PRCGVPDQ. Cysteine 111 provides a ligand contact to Zn(2+). Residues 132-625 are Extracellular-facing; the sequence is YALTGRKWNN…QMEEVARTVN (494 aa). Residue asparagine 150 is glycosylated (N-linked (GlcNAc...) asparagine). Histidine 259 contributes to the Zn(2+) binding site. The active site involves glutamate 260. Residues histidine 263 and histidine 269 each coordinate Zn(2+). The interval 300-370 is disordered; it reads QQLYGTPDGQ…RPDQYGPNIC (71 aa). Low complexity predominate over residues 305–322; sequence TPDGQPQPTQPLPTVTPR. Over residues 333 to 342 the composition is skewed to pro residues; it reads RPPQPPPPGG. Hemopexin repeat units lie at residues 367-415, 416-461, 463-511, and 512-559; these read PNIC…WRGL, PGDI…GLGI, YDRI…QGIP, and ASPK…FMGC. A disulfide bridge links cysteine 370 with cysteine 559. The tract at residues 574–593 is disordered; it reads RPPFNPHGGAEPGADSAEGD. Serine 589 is modified (phosphoserine). Residues 626-646 traverse the membrane as a helical segment; it reads VVMVLVPLLLLLCVLGLTYAL. Topologically, residues 647–669 are cytoplasmic; it reads VQMQRKGAPRVLLYCKRSLQEWV.

Belongs to the peptidase M10A family. Zn(2+) is required as a cofactor. Requires Ca(2+) as cofactor. In terms of processing, the precursor is cleaved by a furin endopeptidase. Appeared to be synthesized preferentially in liver, placenta, testis, colon and intestine. Substantial amounts are also detected in pancreas, kidney, lung, heart and skeletal muscle.

Its subcellular location is the membrane. Functionally, endopeptidase that degrades various components of the extracellular matrix. May activate progelatinase A. The chain is Matrix metalloproteinase-15 (MMP15) from Homo sapiens (Human).